We begin with the raw amino-acid sequence, 564 residues long: Protein glycosylation K (564 aa).

Residues 1 to 15 (MLKKLFFILSKEDKN) lie on the Cytoplasmic side of the membrane. A helical transmembrane segment spans residues 16 to 38 (FLFFLLVFSVFISFIETFAISLV). Residues 17–319 (LFFLLVFSVF…IITSYHDLLY (303 aa)) form the ABC transmembrane type-1 domain. The Extracellular segment spans residues 39–76 (MPFITLASDFSYFDRNKYLISLKEYLNIPVFEIIVYFG). The interval 46 to 67 (SDFSYFDRNKYLISLKEYLNIP) is important for stimulation of ATPase activity by lipid-linked oligosaccharides and subsequent translocation of lipid-linked oligosaccharides. A helical transmembrane segment spans residues 77–98 (VGLIVFYVFRALLNAYYFHLLA). Topologically, residues 99 to 149 (RFSKGRYHAIAYKVFSKFLNINYEKFTQKNQSEILKSITGEVYNLSTMISS) are cytoplasmic. A helical membrane pass occupies residues 150 to 170 (FLLLMSEIFVVLLLYALMLLI). The Extracellular portion of the chain corresponds to 171–173 (NYK). A helical transmembrane segment spans residues 174 to 197 (ITLFLSIFMVLNAFILVKILSPII). At 198–254 (KKAGVRREEAMKNFFEILNTNLNNFKFIKLKTKEDGVLSLFKAQSEAFSKANITNES) the chain is on the cytoplasmic side. A helical membrane pass occupies residues 255–276 (VAAVPRIYLEGIGFCVLVFIVV). Over 277–292 (FLVLKNESDISGILST) the chain is Extracellular. Residues 293–314 (ISIFVLALYRLMPSANRIITSY) traverse the membrane as a helical segment. Over 315–564 (HDLLYYHSSL…LEHGKLKEEK (250 aa)) the chain is Cytoplasmic. One can recognise an ABC transporter domain in the interval 349-564 (LKICNLSFGY…LEHGKLKEEK (216 aa)). 382-389 (GESGCGKS) is an ATP binding site.

This sequence belongs to the ABC transporter superfamily. As to quaternary structure, homodimer; domain-swapped. Helices that arise in transmembrane regions 4 and 5 from one subunit cross over and contact the nucleotide-binding domain from the other subunit.

The protein resides in the cell inner membrane. The catalysed reaction is ATP + H2O + lipopolysaccharideSide 1 = ADP + phosphate + lipopolysaccharideSide 2.. Its pathway is protein modification; protein glycosylation. In terms of biological role, mediates the ATP-dependent translocation of the undecaprenylpyrophosphate-linked heptasaccharide intermediate across the cell membrane; this is an essential step during the N-linked protein glycosylation pathway. Transport across the membrane is effected via ATP-driven conformation changes. Most likely, only the polar and charged part of the glycolipid enter the substrate-binding cavity, and the lipid tail remains exposed to the membrane lipids during the transmembrane flipping process. This chain is Protein glycosylation K (pglK), found in Campylobacter jejuni subsp. jejuni serotype O:2 (strain ATCC 700819 / NCTC 11168).